The following is a 416-amino-acid chain: Glutamyl-tRNA reductase (416 aa).

Substrate contacts are provided by residues Thr49–Arg52, Ser105, Glu110–Gln112, and Gln116. Cys50 serves as the catalytic Nucleophile. Gly185–Ile190 is an NADP(+) binding site.

This sequence belongs to the glutamyl-tRNA reductase family. In terms of assembly, homodimer.

The catalysed reaction is (S)-4-amino-5-oxopentanoate + tRNA(Glu) + NADP(+) = L-glutamyl-tRNA(Glu) + NADPH + H(+). The protein operates within porphyrin-containing compound metabolism; protoporphyrin-IX biosynthesis; 5-aminolevulinate from L-glutamyl-tRNA(Glu): step 1/2. Functionally, catalyzes the NADPH-dependent reduction of glutamyl-tRNA(Glu) to glutamate 1-semialdehyde (GSA). This chain is Glutamyl-tRNA reductase, found in Shewanella pealeana (strain ATCC 700345 / ANG-SQ1).